We begin with the raw amino-acid sequence, 410 residues long: Peptidase T (410 aa).

His-79 provides a ligand contact to Zn(2+). Asp-81 is an active-site residue. Asp-142 is a binding site for Zn(2+). Glu-176 (proton acceptor) is an active-site residue. Zn(2+) contacts are provided by Glu-177, Asp-199, and His-381.

It belongs to the peptidase M20B family. The cofactor is Zn(2+).

The protein resides in the cytoplasm. The catalysed reaction is Release of the N-terminal residue from a tripeptide.. Cleaves the N-terminal amino acid of tripeptides. The chain is Peptidase T from Bacillus thuringiensis subsp. konkukian (strain 97-27).